Reading from the N-terminus, the 1170-residue chain is PAN2-PAN3 deadenylation complex catalytic subunit PAN2 (1170 aa).

WD repeat units lie at residues 104–144 (ENMK…IIKQ) and 280–319 (NISS…HFTD). The segment at 319 to 458 (DMAIPIELPE…DPNEIESLKP (140 aa)) is linker. The interval 399-459 (RRNQVEDTRN…PNEIESLKPE (61 aa)) is disordered. Positions 443–452 (VDQEPEDPNE) are enriched in acidic residues. The region spanning 459-846 (EAPPLYRNLE…MPAVLLFQIK (388 aa)) is the USP domain. Positions 894–1067 (VALDTEFVSL…EDARTALKLY (174 aa)) constitute an Exonuclease domain. Positions 897, 899, 1006, and 1059 each coordinate a divalent metal cation. Residues 1094-1170 (NFKPPRREDR…PSKASSPLPK (77 aa)) form a disordered region. Basic and acidic residues predominate over residues 1098–1108 (PRREDREKELQ). Positions 1109–1119 (RQSTPPNSTAP) are enriched in polar residues.

The protein belongs to the peptidase C19 family. PAN2 subfamily. Forms a heterotrimer with an asymmetric homodimer of the regulatory subunit PAN3 to form the poly(A)-nuclease (PAN) deadenylation complex. A divalent metal cation is required as a cofactor.

The protein localises to the cytoplasm. The enzyme catalyses Exonucleolytic cleavage of poly(A) to 5'-AMP.. Positively regulated by the regulatory subunit PAN3. In terms of biological role, catalytic subunit of the poly(A)-nuclease (PAN) deadenylation complex, one of two cytoplasmic mRNA deadenylases involved in mRNA turnover. PAN specifically shortens poly(A) tails of RNA and the activity is stimulated by poly(A)-binding protein PAB1. PAN deadenylation is followed by rapid degradation of the shortened mRNA tails by the CCR4-NOT complex. Deadenylated mRNAs are then degraded by two alternative mechanisms, namely exosome-mediated 3'-5' exonucleolytic degradation, or deadenylation-dependent mRNA decaping and subsequent 5'-3' exonucleolytic degradation by XRN1. May also be involved in post-transcriptional maturation of mRNA poly(A) tails. The protein is PAN2-PAN3 deadenylation complex catalytic subunit PAN2 of Chaetomium thermophilum (strain DSM 1495 / CBS 144.50 / IMI 039719) (Thermochaetoides thermophila).